We begin with the raw amino-acid sequence, 335 residues long: Trans-3-hydroxy-L-proline dehydratase (335 aa).

The active-site Proton acceptor is cysteine 91. Residues 92–93 (GH), histidine 222, and 256–257 (GS) contribute to the substrate site.

It belongs to the proline racemase family. In terms of assembly, homodimer.

The enzyme catalyses trans-3-hydroxy-L-proline = 1-pyrroline-2-carboxylate + H2O. In terms of biological role, catalyzes the dehydration of trans-3-hydroxy-L-proline (t3LHyp) to Delta(1)-pyrroline-2-carboxylate (Pyr2C). Does not possess neither proline racemase nor 4-hydroxyproline 2-epimerase activities. The protein is Trans-3-hydroxy-L-proline dehydratase of Burkholderia cenocepacia (strain HI2424).